A 445-amino-acid polypeptide reads, in one-letter code: MRYHPHTPDDVRAMLDVVGAERVDDLFRSIPQALRLDRPLDLPPAADEIALFSELRRLAARNETAHPPFVGAGCYPHHVPPVVDQLLLRGEFFTAYTPYQPEISQGTLQALFEWQTFVCLLTGMDVSNASMYDGATATAEAALMAGRITGRDKVVVSAALHPEYRKVLATYLRSTGDEIVTVPFGADGRTDLAALQQAVDGRTACVILGYPNFLGVVDALPEAAAIARKAGALTVSATAEAVSLGLLQAPGALGADVAVGTFQSFGNPMSFGGPAPGFFATREKHVRQMPGRVAGATVDKQGRRGFVLTLSTREQHIRREKATSNICTNSGLCALASTVHLSLLGKRGLAELARLNHGRARMLRDAMERAGCRPVFSGPFFNEQVFDVGDAEAVVAKLAKRGIVAGAPLARWFPDAPSAKGALLCAATELHGPELIQLFAGAVRS.

Belongs to the GcvP family. N-terminal subunit subfamily. The glycine cleavage system is composed of four proteins: P, T, L and H. In this organism, the P 'protein' is a heterodimer of two subunits.

It catalyses the reaction N(6)-[(R)-lipoyl]-L-lysyl-[glycine-cleavage complex H protein] + glycine + H(+) = N(6)-[(R)-S(8)-aminomethyldihydrolipoyl]-L-lysyl-[glycine-cleavage complex H protein] + CO2. In terms of biological role, the glycine cleavage system catalyzes the degradation of glycine. The P protein binds the alpha-amino group of glycine through its pyridoxal phosphate cofactor; CO(2) is released and the remaining methylamine moiety is then transferred to the lipoamide cofactor of the H protein. The sequence is that of Probable glycine dehydrogenase (decarboxylating) subunit 1 from Anaeromyxobacter dehalogenans (strain 2CP-C).